A 633-amino-acid polypeptide reads, in one-letter code: Extracellular metalloproteinase 3 (633 aa).

A signal peptide spans 1 to 18 (MHGLLLAGLLALPMNVLA). Positions 19-246 (HPAEQQTSSV…VHNVVDYVAS (228 aa)) are excised as a propeptide. An N-linked (GlcNAc...) asparagine glycan is attached at Asn-410. His-429 contacts Zn(2+). Residue Glu-430 is part of the active site. Zn(2+) is bound at residue His-433. Asn-480 carries N-linked (GlcNAc...) asparagine glycosylation.

This sequence belongs to the peptidase M36 family. Zn(2+) is required as a cofactor.

It is found in the secreted. Its function is as follows. Secreted metalloproteinase probably acting as a virulence factor. This Arthroderma otae (Microsporum canis) protein is Extracellular metalloproteinase 3 (MEP3).